A 199-amino-acid polypeptide reads, in one-letter code: Protein-methionine-sulfoxide reductase heme-binding subunit MsrQ (199 aa).

The next 4 helical transmembrane spans lie at 10–30 (WLKV…FWAI), 82–102 (LWCF…ELGI), 116–136 (PYLT…LTST), and 153–173 (VVYL…KILS).

The protein belongs to the MsrQ family. Heterodimer of a catalytic subunit (MsrP) and a heme-binding subunit (MsrQ). Requires FMN as cofactor. Heme b is required as a cofactor.

The protein resides in the cell inner membrane. Functionally, part of the MsrPQ system that repairs oxidized periplasmic proteins containing methionine sulfoxide residues (Met-O), using respiratory chain electrons. Thus protects these proteins from oxidative-stress damage caused by reactive species of oxygen and chlorine generated by the host defense mechanisms. MsrPQ is essential for the maintenance of envelope integrity under bleach stress, rescuing a wide series of structurally unrelated periplasmic proteins from methionine oxidation, including the primary periplasmic chaperone SurA and the lipoprotein Pal. MsrQ provides electrons for reduction to the reductase catalytic subunit MsrP, using the quinone pool of the respiratory chain. In Salmonella newport (strain SL254), this protein is Protein-methionine-sulfoxide reductase heme-binding subunit MsrQ.